The following is a 681-amino-acid chain: Minichromosome maintenance domain-containing protein 2 (681 aa).

Position 292 is a phosphoserine (Ser-292). The MCM domain occupies 533-621 (KQFTTEDFEK…LIAALLFEIS (89 aa)).

Its function is as follows. Plays an important role in meiotic recombination and associated DNA double-strand break repair. This is Minichromosome maintenance domain-containing protein 2 (Mcmdc2) from Rattus norvegicus (Rat).